Reading from the N-terminus, the 1038-residue chain is Pentatricopeptide repeat-containing protein At5g27270 (1038 aa).

Positions 23 to 38 are enriched in low complexity; sequence SRNSRISIKSSSSSSK. Residues 23 to 69 form a disordered region; that stretch reads SRNSRISIKSSSSSSKVRPDPWSLSDGNPEKPKPRYERPKHPLSDDD. A compositionally biased stretch (basic and acidic residues) spans 50 to 69; that stretch reads NPEKPKPRYERPKHPLSDDD. PPR repeat units follow at residues 187-221, 222-256, 257-291, 292-326, 327-361, 362-396, 397-431, 432-466, 467-501, 502-535, 536-570, 601-631, 634-668, 669-699, 703-737, 738-772, 773-807, 808-842, 843-877, 878-912, 913-947, 948-982, and 983-1017; these read SVVV…GCEP, DAVA…RILL, STSV…GVPP, NEFT…GFVP, EEVT…GIVP, SNYT…KIPA, DEVI…NLLA, DEKT…DIPL, SRFA…GLPD, ASSC…QVHF, DIEL…ARVK, DVMA…MFKT, GSSA…GLRM, EEET…AGES, GKSV…GCDP, GAVT…NIEL, DTVG…GVPC, SIQT…GLYL, DEKI…GIKP, GTPS…GRCT, DLST…GIPL, SHSH…GISP, and DSAC…SVED.

This sequence belongs to the PPR family. P subfamily.

The protein is Pentatricopeptide repeat-containing protein At5g27270 (EMB976) of Arabidopsis thaliana (Mouse-ear cress).